A 295-amino-acid polypeptide reads, in one-letter code: Pyridoxal 5'-phosphate synthase subunit PdxS (295 aa).

Asp25 is a binding site for D-ribose 5-phosphate. Lys82 functions as the Schiff-base intermediate with D-ribose 5-phosphate in the catalytic mechanism. Gly154 lines the D-ribose 5-phosphate pocket. Arg166 is a D-glyceraldehyde 3-phosphate binding site. D-ribose 5-phosphate-binding positions include Gly215 and 236–237; that span reads GS.

The protein belongs to the PdxS/SNZ family. In the presence of PdxT, forms a dodecamer of heterodimers.

It carries out the reaction aldehydo-D-ribose 5-phosphate + D-glyceraldehyde 3-phosphate + L-glutamine = pyridoxal 5'-phosphate + L-glutamate + phosphate + 3 H2O + H(+). Its pathway is cofactor biosynthesis; pyridoxal 5'-phosphate biosynthesis. In terms of biological role, catalyzes the formation of pyridoxal 5'-phosphate from ribose 5-phosphate (RBP), glyceraldehyde 3-phosphate (G3P) and ammonia. The ammonia is provided by the PdxT subunit. Can also use ribulose 5-phosphate and dihydroxyacetone phosphate as substrates, resulting from enzyme-catalyzed isomerization of RBP and G3P, respectively. The polypeptide is Pyridoxal 5'-phosphate synthase subunit PdxS (Staphylococcus saprophyticus subsp. saprophyticus (strain ATCC 15305 / DSM 20229 / NCIMB 8711 / NCTC 7292 / S-41)).